The primary structure comprises 187 residues: Peptidyl-tRNA hydrolase (187 aa).

Tyr-15 serves as a coordination point for tRNA. The active-site Proton acceptor is the His-20. Positions 65, 67, and 113 each coordinate tRNA.

The protein belongs to the PTH family. As to quaternary structure, monomer.

It is found in the cytoplasm. The enzyme catalyses an N-acyl-L-alpha-aminoacyl-tRNA + H2O = an N-acyl-L-amino acid + a tRNA + H(+). Its function is as follows. Hydrolyzes ribosome-free peptidyl-tRNAs (with 1 or more amino acids incorporated), which drop off the ribosome during protein synthesis, or as a result of ribosome stalling. In terms of biological role, catalyzes the release of premature peptidyl moieties from peptidyl-tRNA molecules trapped in stalled 50S ribosomal subunits, and thus maintains levels of free tRNAs and 50S ribosomes. This is Peptidyl-tRNA hydrolase from Methylococcus capsulatus (strain ATCC 33009 / NCIMB 11132 / Bath).